We begin with the raw amino-acid sequence, 400 residues long: Probable cysteine protease atg4 (400 aa).

Cys131 (nucleophile) is an active-site residue. Catalysis depends on residues Asp305 and His307.

It belongs to the peptidase C54 family.

The protein resides in the cytoplasm. It is found in the nucleus. Its subcellular location is the preautophagosomal structure. It catalyses the reaction [protein]-C-terminal L-amino acid-glycyl-phosphatidylethanolamide + H2O = [protein]-C-terminal L-amino acid-glycine + a 1,2-diacyl-sn-glycero-3-phosphoethanolamine. In terms of biological role, cysteine protease that plays a key role in cytoplasm to vacuole transport (Cvt) and autophagy by mediating both proteolytic activation and delipidation of ATG8. Required for selective autophagic degradation of the nucleus (nucleophagy) as well as for mitophagy which contributes to regulate mitochondrial quantity and quality by eliminating the mitochondria to a basal level to fulfill cellular energy requirements and preventing excess ROS production. The protease activity is required for proteolytic activation of ATG8: cleaves the C-terminal amino acid of ATG8 to reveal a C-terminal glycine. ATG8 ubiquitin-like activity requires the exposure of the glycine at the C-terminus for its conjugation to phosphatidylethanolamine (PE) and its insertion to membranes, which is necessary for autophagy. The ATG8-PE conjugate mediates tethering between adjacent membranes and stimulates membrane hemifusion, leading to expansion of the autophagosomal membrane during autophagy. In addition to the protease activity, also catalyzes deconjugation of PE-conjugated forms of ATG8 during macroautophagy: ATG8 delipidation is required to release the protein from membranes, which facilitates multiple events during macroautophagy, and especially for efficient autophagosome biogenesis, the assembly of ATG9-containing tubulovesicular clusters into phagophores/autophagosomes, and for the disassembly of PAS-associated ATG components. ATG8 delipidation by ATG4 also recycles ATG8-PE generated on inappropriate membranes to maintain a reservoir of unlipidated ATG8 that is required for autophagosome formation at the PAS. The protein is Probable cysteine protease atg4 (atg4) of Aspergillus clavatus (strain ATCC 1007 / CBS 513.65 / DSM 816 / NCTC 3887 / NRRL 1 / QM 1276 / 107).